The following is a 781-amino-acid chain: Phenylalanine--tRNA ligase beta subunit (781 aa).

One can recognise a tRNA-binding domain in the interval 39-147; the sequence is APPFNDVVVA…DDAPVGEDLR (109 aa). The region spanning 398 to 473 is the B5 domain; it reads PRREPIELRL…RLFGYDRIPA (76 aa). Asp451, Asp457, Glu460, and Glu461 together coordinate Mg(2+). The FDX-ACB domain maps to 687–780; sequence SRFPQVRRDL…AARRCSATLR (94 aa).

The protein belongs to the phenylalanyl-tRNA synthetase beta subunit family. Type 1 subfamily. Tetramer of two alpha and two beta subunits. Mg(2+) is required as a cofactor.

The protein localises to the cytoplasm. It catalyses the reaction tRNA(Phe) + L-phenylalanine + ATP = L-phenylalanyl-tRNA(Phe) + AMP + diphosphate + H(+). This is Phenylalanine--tRNA ligase beta subunit from Thiobacillus denitrificans (strain ATCC 25259 / T1).